The chain runs to 252 residues: Cyclic di-GMP binding protein VCA0042 (252 aa).

Positions Met-1–Asn-11 are enriched in basic and acidic residues. Positions Met-1 to Val-24 are disordered. Over residues Asn-12–Val-24 the composition is skewed to polar residues. The PilZ domain maps to Gln-134–Leu-233.

Belongs to the YcgR family. As to quaternary structure, dimer.

The protein resides in the bacterial flagellum basal body. May act as a flagellar brake, regulating swimming and swarming in a bis-(3'-5') cyclic diguanylic acid (c-di-GMP)-dependent manner. Increasing levels of c-di-GMP lead to decreased motility (Potential). Binds bis-(3'-5') cyclic diguanylic acid (c-di-GMP) with a dissociation constant of 170 nM in the presence of 10 mM KCl and with 100 nM in its absence. Binds 1 to 2 c-di-GMP per subunit. Only 1 c-di-GMP is seen in the wild-type crystal, while 2 are seen in the mutant. Depending on the concentration of K(+) stoichiometries of 1:1, 1.43:1 and 2:1 are determined by isothermal titration calorimetry. In Vibrio cholerae serotype O1 (strain ATCC 39315 / El Tor Inaba N16961), this protein is Cyclic di-GMP binding protein VCA0042.